We begin with the raw amino-acid sequence, 193 residues long: Acyl carrier protein phosphodiesterase (193 aa).

The protein belongs to the AcpH family.

It carries out the reaction holo-[ACP] + H2O = apo-[ACP] + (R)-4'-phosphopantetheine + H(+). Converts holo-ACP to apo-ACP by hydrolytic cleavage of the phosphopantetheine prosthetic group from ACP. The polypeptide is Acyl carrier protein phosphodiesterase (Escherichia coli O6:H1 (strain CFT073 / ATCC 700928 / UPEC)).